The sequence spans 312 residues: MGKGKKLLITGGRGMVGRNLIACAARSGWEIIAPTSVDLDLRNAEAVEQYIRRQLPDVVVHAAGVVGGIHANIADPIHFLADNAAMALNVVMSSFRSEVVTLINLSSSCMYPACIEGPLKECDILRGPFEVTNEGYALAKTVGLKICEYIDKLPNFNYKTLIACNLYGVGDNFDPRRSHLLPAIIEKIHKASQCGSESVSIWGDGTARREFMFAYDFAKIIIKALEVPELIPSSMNVGVGKDLSVLEYYSLVARVIGWSGEFVYDLNRPVGMRSKLMDITHLTALGWVPERSLEGGIRSTYQYYITGNEVYE.

An NADP(+)-binding site is contributed by 11–17 (GGRGMVG). Tyr-136 (proton donor/acceptor) is an active-site residue. Residues Lys-140 and His-179 each contribute to the NADP(+) site. Substrate-binding residues include Lys-187, Trp-202, and Arg-209.

Belongs to the NAD(P)-dependent epimerase/dehydratase family. Fucose synthase subfamily.

It carries out the reaction GDP-beta-L-fucose + NADP(+) = GDP-4-dehydro-alpha-D-rhamnose + NADPH + H(+). It participates in nucleotide-sugar biosynthesis; GDP-L-fucose biosynthesis via de novo pathway; GDP-L-fucose from GDP-alpha-D-mannose: step 2/2. In terms of biological role, catalyzes the two-step NADP-dependent conversion of GDP-4-dehydro-6-deoxy-D-mannose to GDP-fucose, involving an epimerase and a reductase reaction. This chain is GDP-L-fucose synthase, found in Azorhizobium caulinodans (strain ATCC 43989 / DSM 5975 / JCM 20966 / LMG 6465 / NBRC 14845 / NCIMB 13405 / ORS 571).